Here is a 105-residue protein sequence, read N- to C-terminus: Extracellular guanyl-specific ribonuclease Fl1 (105 aa).

2 disulfide bridges follow: C5-C101 and C23-C82. H39 is an active-site residue. E57 (proton acceptor) is an active-site residue. H90 (proton donor) is an active-site residue.

The protein belongs to the ribonuclease N1/T1 family.

It carries out the reaction [RNA] containing guanosine + H2O = an [RNA fragment]-3'-guanosine-3'-phosphate + a 5'-hydroxy-ribonucleotide-3'-[RNA fragment].. This chain is Extracellular guanyl-specific ribonuclease Fl1, found in Gibberella baccata (Fusarium lateritium).